We begin with the raw amino-acid sequence, 1034 residues long: Condensin complex subunit 3 (1034 aa).

7 HEAT repeats span residues 95-132, 139-176, 178-213, 242-279, 281-317, 439-476, and 618-655; these read SPVNCLFNFLLQSHGASSMAVRFRVCQLINKLLVNLPE, DLFDKIHDAMLIRLKDRVPNVRIQAVLALARLQDPSDP, CPVSNAYVHLLENDSNPEVRRAVLTCIAPSAKSLPK, LTIAQRVKLLQQGLNDRSAAVKDVIQKKLIQAWLQYSE, DVLDLLHRLDVENSPEVSLSALNALFSVSPVGELVQN, TSLISSLAELLLFVLKDDDKRIQTVAEIISELREPIVT, and DFARQHLPLLLQILQLDEVKVKNSALNAVFDMLLLFGM. A compositionally biased stretch (polar residues) spans 663 to 672; sequence TNPDDSQCKA. A disordered region spans residues 663-693; that stretch reads TNPDDSQCKAQENADEDISEQEKPGSVDENL. 3 HEAT repeats span residues 703–740, 785–823, and 878–915; these read ATVNGILHLFSGFLDSEIAEIRTETAEGLVKLMFSGRL, CFAEAFLPTLQTLFNAPASSPLADVDVANVAELLVDLTR, and ENSTDLLPLLDCAVEDVTDKVCERAIEKVRSQLRSGRE. Residues 909–949 show a composition bias toward basic and acidic residues; the sequence is QLRSGREEHRVSKETEPQVSKETEDRTNLQENEEGKQKDEA. Residues 909 to 1034 are disordered; sequence QLRSGREEHR…LSKLLNEEAN (126 aa). Positions 964 to 984 are enriched in basic residues; sequence RGKATKGRRKGPAAAATRRKA. Positions 985 to 999 are enriched in basic and acidic residues; it reads SKAEEAEAEMERQEE.

Belongs to the CND3 (condensin subunit 3) family. As to quaternary structure, component of the condensin complex, which contains the XCAP-E/SMC2 and XCAP-C/SMC4 heterodimer, and three non SMC subunits that probably regulate the complex: XCAP-H/NCAPH, XCAP-D2/NCAPD2 and XCAP-G/NCAPG. Phosphorylated by cdk1. Its phosphorylation, as well as that of XCAP-D2 and XCAP-H subunits, activates the condensin complex and is required for chromosome condensation.

Its subcellular location is the nucleus. The protein localises to the cytoplasm. The protein resides in the chromosome. In terms of biological role, regulatory subunit of the condensin complex, a complex required for conversion of interphase chromatin into mitotic-like condense chromosomes. The condensin complex probably introduces positive supercoils into relaxed DNA in the presence of type I topoisomerases and converts nicked DNA into positive knotted forms in the presence of type II topoisomerase. In Xenopus laevis (African clawed frog), this protein is Condensin complex subunit 3 (ncapg).